The sequence spans 341 residues: Large ribosomal subunit protein uL10 (341 aa).

A disordered region spans residues 301–341 (EAAPAAAPAAEEKAEEEKKEEEEEKKEDQELSGLDSIFGGF).

This sequence belongs to the universal ribosomal protein uL10 family. In terms of assembly, part of the 50S ribosomal subunit. Forms part of the ribosomal stalk which helps the ribosome interact with GTP-bound translation factors. Forms a heptameric L10(L12)2(L12)2(L12)2 complex, where L10 forms an elongated spine to which the L12 dimers bind in a sequential fashion.

Its function is as follows. Forms part of the ribosomal stalk, playing a central role in the interaction of the ribosome with GTP-bound translation factors. This chain is Large ribosomal subunit protein uL10, found in Aeropyrum pernix (strain ATCC 700893 / DSM 11879 / JCM 9820 / NBRC 100138 / K1).